A 317-amino-acid chain; its full sequence is MANLKDIRDRIKSVKNTRKITEAMRLVAAAKVRRAQEQVLRSRPFADRLSRILENLQSRMRFEEADAPLMEQRTVETITLVAITGDRGLCGGYNANIIKRTEQRFAELKGKGFNVKLVVIGSKAISYFSNRDYPIQAKITGLEQVPTADEANTIATDMLAEFMAAGTDRVEMVFTKFINLVSCKPVLQTLLPLDPQDIADPEDEIFNLTTDQGRLTVEPGTSSANTAPKIPSDIVFEQSPDQLLNALLPLYLQNQLLRCLQESAASELASRMTAMNNASDNAKELAKTLTLDYNKARQAAITQEILEVVGGSAAAGG.

This sequence belongs to the ATPase gamma chain family. F-type ATPases have 2 components, CF(1) - the catalytic core - and CF(0) - the membrane proton channel. CF(1) has five subunits: alpha(3), beta(3), gamma(1), delta(1), epsilon(1). CF(0) has three main subunits: a, b and c.

Its subcellular location is the cellular thylakoid membrane. Functionally, produces ATP from ADP in the presence of a proton gradient across the membrane. The gamma chain is believed to be important in regulating ATPase activity and the flow of protons through the CF(0) complex. In Synechococcus sp. (strain CC9902), this protein is ATP synthase gamma chain.